The primary structure comprises 373 residues: Glutamate 5-kinase (373 aa).

Lysine 16 is an ATP binding site. Substrate-binding residues include serine 56, aspartate 143, and asparagine 155. An ATP-binding site is contributed by 175–176 (TD). Positions 281 to 359 (RGVVTLDDGA…TKIETLLGYK (79 aa)) constitute a PUA domain.

It belongs to the glutamate 5-kinase family.

The protein resides in the cytoplasm. The enzyme catalyses L-glutamate + ATP = L-glutamyl 5-phosphate + ADP. The protein operates within amino-acid biosynthesis; L-proline biosynthesis; L-glutamate 5-semialdehyde from L-glutamate: step 1/2. Catalyzes the transfer of a phosphate group to glutamate to form L-glutamate 5-phosphate. The protein is Glutamate 5-kinase of Teredinibacter turnerae (strain ATCC 39867 / T7901).